A 406-amino-acid polypeptide reads, in one-letter code: Succinylornithine transaminase (406 aa).

Lys-252 carries the N6-(pyridoxal phosphate)lysine modification.

It belongs to the class-III pyridoxal-phosphate-dependent aminotransferase family. AstC subfamily. The cofactor is pyridoxal 5'-phosphate.

It carries out the reaction N(2)-succinyl-L-ornithine + 2-oxoglutarate = N-succinyl-L-glutamate 5-semialdehyde + L-glutamate. Its pathway is amino-acid degradation; L-arginine degradation via AST pathway; L-glutamate and succinate from L-arginine: step 3/5. Functionally, catalyzes the transamination of N(2)-succinylornithine and alpha-ketoglutarate into N(2)-succinylglutamate semialdehyde and glutamate. Can also act as an acetylornithine aminotransferase. The polypeptide is Succinylornithine transaminase (Escherichia fergusonii (strain ATCC 35469 / DSM 13698 / CCUG 18766 / IAM 14443 / JCM 21226 / LMG 7866 / NBRC 102419 / NCTC 12128 / CDC 0568-73)).